We begin with the raw amino-acid sequence, 525 residues long: Protein translocase subunit SecD (525 aa).

6 helical membrane-spanning segments follow: residues 9-29 (LYLV…SLLG), 368-388 (VLIG…GFGM), 392-412 (LAVV…QATL), 415-435 (PGIA…VLIF), 460-480 (FSTI…LYQF), and 487-507 (GFAV…IFVT).

It belongs to the SecD/SecF family. SecD subfamily. In terms of assembly, forms a complex with SecF. Part of the essential Sec protein translocation apparatus which comprises SecA, SecYEG and auxiliary proteins SecDF-YajC and YidC.

Its subcellular location is the cell inner membrane. Part of the Sec protein translocase complex. Interacts with the SecYEG preprotein conducting channel. SecDF uses the proton motive force (PMF) to complete protein translocation after the ATP-dependent function of SecA. This chain is Protein translocase subunit SecD, found in Magnetococcus marinus (strain ATCC BAA-1437 / JCM 17883 / MC-1).